A 353-amino-acid chain; its full sequence is Photosystem II D2 protein (353 aa).

Threonine 2 is subject to N-acetylthreonine. Threonine 2 is subject to Phosphothreonine. Residues 41 to 61 (CAYFALGGWFTGTTFVTSWYT) traverse the membrane as a helical segment. Histidine 118 lines the chlorophyll a pocket. Residues 125-141 (GFMLRQFELARSVQLRP) traverse the membrane as a helical segment. 2 residues coordinate pheophytin a: glutamine 130 and asparagine 143. The helical transmembrane segment at 153–166 (VFVSVFLIYPLGQS) threads the bilayer. Histidine 198 contributes to the chlorophyll a binding site. The helical transmembrane segment at 208-228 (AALLCAIHGATVENTLFEDGD) threads the bilayer. Residues histidine 215 and phenylalanine 262 each contribute to the a plastoquinone site. Position 215 (histidine 215) interacts with Fe cation. Histidine 269 is a Fe cation binding site. Residues 279-295 (GSWMSAIGVVGLALNLR) form a helical membrane-spanning segment.

This sequence belongs to the reaction center PufL/M/PsbA/D family. In terms of assembly, PSII is composed of 1 copy each of membrane proteins PsbA, PsbB, PsbC, PsbD, PsbE, PsbF, PsbH, PsbI, PsbJ, PsbK, PsbL, PsbM, PsbT, PsbX, PsbY, PsbZ, Psb30/Ycf12, at least 3 peripheral proteins of the oxygen-evolving complex and a large number of cofactors. It forms dimeric complexes. The D1/D2 heterodimer binds P680, chlorophylls that are the primary electron donor of PSII, and subsequent electron acceptors. It shares a non-heme iron and each subunit binds pheophytin, quinone, additional chlorophylls, carotenoids and lipids. There is also a Cl(-1) ion associated with D1 and D2, which is required for oxygen evolution. The PSII complex binds additional chlorophylls, carotenoids and specific lipids. is required as a cofactor.

Its subcellular location is the plastid. The protein resides in the chloroplast thylakoid membrane. The enzyme catalyses 2 a plastoquinone + 4 hnu + 2 H2O = 2 a plastoquinol + O2. Photosystem II (PSII) is a light-driven water:plastoquinone oxidoreductase that uses light energy to abstract electrons from H(2)O, generating O(2) and a proton gradient subsequently used for ATP formation. It consists of a core antenna complex that captures photons, and an electron transfer chain that converts photonic excitation into a charge separation. The D1/D2 (PsbA/PsbD) reaction center heterodimer binds P680, the primary electron donor of PSII as well as several subsequent electron acceptors. D2 is needed for assembly of a stable PSII complex. In Pinus koraiensis (Korean pine), this protein is Photosystem II D2 protein.